Here is a 576-residue protein sequence, read N- to C-terminus: Putative export ATP-binding/permease protein RF_0214 (576 aa).

The ABC transmembrane type-1 domain maps to 20 to 303 (LIIVMISLLS…IFELLSEIHL (284 aa)). The next 6 helical transmembrane spans lie at 21-41 (IIVMISLLSVSASLLLIGSVF), 61-81 (ILYICLLIIILSIASFFRSYF), 135-155 (FLSFFIRNSVMLIGGVTLMFF), 158-178 (FKLASIVIITIPILLIPLIKF), 242-262 (ALFFAISIAIIFLAITLVVWI), and 277-297 (IISFIYYAIIAGFSSGGIFEL). The ABC transporter domain maps to 336–572 (IEFKNVDFTY…SEIYRNICRE (237 aa)). 371–378 (GRSGGGKS) lines the ATP pocket.

This sequence belongs to the ABC transporter superfamily. As to quaternary structure, homodimer.

It localises to the cell inner membrane. Functionally, part of an ABC transporter complex. Transmembrane domains (TMD) form a pore in the inner membrane and the ATP-binding domain (NBD) is responsible for energy generation. The chain is Putative export ATP-binding/permease protein RF_0214 from Rickettsia felis (strain ATCC VR-1525 / URRWXCal2) (Rickettsia azadi).